Here is a 184-residue protein sequence, read N- to C-terminus: C-phycoerythrin class 1 subunit beta (184 aa).

Cys-50 and Cys-61 together coordinate (2R,3E)-phycoerythrobilin. The residue at position 72 (Asn-72) is an N4-methylasparagine. Cys-82 and Cys-165 together coordinate (2R,3E)-phycoerythrobilin.

This sequence belongs to the phycobiliprotein family. In terms of assembly, heterodimer of an alpha and a beta chain. Contains three covalently linked bilin chromophores.

It localises to the cellular thylakoid membrane. Light-harvesting photosynthetic bile pigment-protein from the phycobiliprotein complex. The polypeptide is C-phycoerythrin class 1 subunit beta (cpeB) (Synechococcus sp. (strain WH7803)).